Here is a 375-residue protein sequence, read N- to C-terminus: Queuine tRNA-ribosyltransferase (375 aa).

Catalysis depends on D89, which acts as the Proton acceptor. Substrate is bound by residues D89–F93, D143, Q187, and G214. Positions G245–D251 are RNA binding. D264 serves as the catalytic Nucleophile. The RNA binding; important for wobble base 34 recognition stretch occupies residues T269–R273. Zn(2+)-binding residues include C302, C304, C307, and H333.

The protein belongs to the queuine tRNA-ribosyltransferase family. In terms of assembly, homodimer. Within each dimer, one monomer is responsible for RNA recognition and catalysis, while the other monomer binds to the replacement base PreQ1. It depends on Zn(2+) as a cofactor.

It carries out the reaction 7-aminomethyl-7-carbaguanine + guanosine(34) in tRNA = 7-aminomethyl-7-carbaguanosine(34) in tRNA + guanine. It functions in the pathway tRNA modification; tRNA-queuosine biosynthesis. Its function is as follows. Catalyzes the base-exchange of a guanine (G) residue with the queuine precursor 7-aminomethyl-7-deazaguanine (PreQ1) at position 34 (anticodon wobble position) in tRNAs with GU(N) anticodons (tRNA-Asp, -Asn, -His and -Tyr). Catalysis occurs through a double-displacement mechanism. The nucleophile active site attacks the C1' of nucleotide 34 to detach the guanine base from the RNA, forming a covalent enzyme-RNA intermediate. The proton acceptor active site deprotonates the incoming PreQ1, allowing a nucleophilic attack on the C1' of the ribose to form the product. After dissociation, two additional enzymatic reactions on the tRNA convert PreQ1 to queuine (Q), resulting in the hypermodified nucleoside queuosine (7-(((4,5-cis-dihydroxy-2-cyclopenten-1-yl)amino)methyl)-7-deazaguanosine). The polypeptide is Queuine tRNA-ribosyltransferase (Shigella flexneri serotype 5b (strain 8401)).